The following is a 318-amino-acid chain: (1S)-1,7-diacetoxy-luvungin A aldo-keto reductase (318 aa).

The active-site Proton donor is Tyr54.

It belongs to the aldo/keto reductase family. In terms of tissue distribution, expressed in flowers, maturing fruits and in juice vesicles.

It catalyses the reaction (1S)-1,7-diacetoxy-luvungin A + AH2 + H2O = (1R,2R,3S,8R,10R,11R,15S,16S)-3-(acetyloxy)-15-[(4R)-4-[(2S)-3,3-dimethyloxiran-2-yl]-1,4-dihydroxybutan-2-yl]-2,7,7,11,16-pentamethyl-5-oxo-6-oxatetracyclo[9.7.0.0(2,8).0(12,16)]octadec-12-en-10-yl acetate + acetate + A + H(+). Its pathway is secondary metabolite biosynthesis; terpenoid biosynthesis. Aldo-keto reductase involved in the biosynthesis of limonoids triterpene natural products such as limonin, a compound with insecticidal activity responsible for the bitter taste in citrus. Can use (1S)-1,7-diacetoxy-luvungin A as substrate. This Citrus sinensis (Sweet orange) protein is (1S)-1,7-diacetoxy-luvungin A aldo-keto reductase.